Consider the following 319-residue polypeptide: Cutinase cut1 (319 aa).

The signal sequence occupies residues 1-58 (MPPHAARPGPAQNRRGRAMAVITPRRERSSLLSRALRFTAAAATALVTAVSLAAPAHA). Poly(ethylene terephthalate) is bound at residue Tyr-118. The Nucleophile role is filled by Ser-188. Met-189 and Trp-213 together coordinate poly(ethylene terephthalate). Residues Asp-234 and His-266 each act as charge relay system in the active site. A disulfide bridge links Cys-299 with Cys-317.

It belongs to the AB hydrolase superfamily.

It is found in the secreted. The protein localises to the periplasm. It catalyses the reaction an acetyl ester + H2O = an aliphatic alcohol + acetate + H(+). The enzyme catalyses a butanoate ester + H2O = an aliphatic alcohol + butanoate + H(+). The catalysed reaction is pentanoate ester + H2O = pentanoate + an aliphatic alcohol + H(+). It carries out the reaction an octanoate ester + H2O = an aliphatic alcohol + octanoate + H(+). It catalyses the reaction decanoate ester + H2O = decanoate + an aliphatic alcohol + H(+). The enzyme catalyses a dodecanoate ester + H2O = an aliphatic alcohol + dodecanoate + H(+). The catalysed reaction is a tetradecanoate ester + H2O = an aliphatic alcohol + tetradecanoate + H(+). It carries out the reaction hexadecanoate ester + H2O = an aliphatic alcohol + hexadecanoate + H(+). It catalyses the reaction cutin + H2O = cutin monomers.. The enzyme catalyses (ethylene terephthalate)(n) + H2O = (ethylene terephthalate)(n-1) + 4-[(2-hydroxyethoxy)carbonyl]benzoate + H(+). Activated by magnesium ions. Activated by calcium ions. In terms of biological role, catalyzes the hydrolysis of cutin, a polyester that forms the structure of plant cuticle. Shows esterase activity towards p-nitrophenol-linked aliphatic esters (pNP-aliphatic esters). Capable of degrading the plastic poly(ethylene terephthalate) (PET), the most abundant polyester plastic in the world. In Thermobifida fusca (Thermomonospora fusca), this protein is Cutinase cut1.